A 385-amino-acid chain; its full sequence is Trehalose-phosphate phosphatase A (385 aa).

The interval M1–S21 is disordered.

The protein belongs to the trehalose phosphatase family. The cofactor is a divalent metal cation. Expressed in flowers.

It catalyses the reaction alpha,alpha-trehalose 6-phosphate + H2O = alpha,alpha-trehalose + phosphate. It participates in glycan biosynthesis; trehalose biosynthesis. Removes the phosphate from trehalose 6-phosphate to produce free trehalose. Trehalose accumulation in plant may improve abiotic stress tolerance. The protein is Trehalose-phosphate phosphatase A (TPPA) of Arabidopsis thaliana (Mouse-ear cress).